Reading from the N-terminus, the 375-residue chain is Succinyl-diaminopimelate desuccinylase (375 aa).

A Zn(2+)-binding site is contributed by H66. Residue D68 is part of the active site. A Zn(2+)-binding site is contributed by D99. E133 functions as the Proton acceptor in the catalytic mechanism. Zn(2+) contacts are provided by E134, E162, and H348.

Belongs to the peptidase M20A family. DapE subfamily. In terms of assembly, homodimer. Zn(2+) serves as cofactor. Requires Co(2+) as cofactor.

The enzyme catalyses N-succinyl-(2S,6S)-2,6-diaminopimelate + H2O = (2S,6S)-2,6-diaminopimelate + succinate. The protein operates within amino-acid biosynthesis; L-lysine biosynthesis via DAP pathway; LL-2,6-diaminopimelate from (S)-tetrahydrodipicolinate (succinylase route): step 3/3. Catalyzes the hydrolysis of N-succinyl-L,L-diaminopimelic acid (SDAP), forming succinate and LL-2,6-diaminopimelate (DAP), an intermediate involved in the bacterial biosynthesis of lysine and meso-diaminopimelic acid, an essential component of bacterial cell walls. The polypeptide is Succinyl-diaminopimelate desuccinylase (Alkalilimnicola ehrlichii (strain ATCC BAA-1101 / DSM 17681 / MLHE-1)).